Reading from the N-terminus, the 462-residue chain is MVGFSGDTIAAIATAIVPQQGSVGIVRLSGAAATEIARQIFQIAGQQPWESHRILYGYIRDPESGRLVDEALLLPMLAPRSYTREDVVELHCHGGLMPVQQTLQLCIRAGARLAEPGEFTLRAFLNGRLDLSQAESIADLISAQSPQAAQAALGSLQGKLGHPIRQLRDRCLDILAEVEARIDFEDDLPPLDLEAIAAQLTAAGADMQAILSTADRGELLRTGLKIAIVGRPNVGKSSLLNAWSRCDRAIVTDLPGRTRDLVESQLIVGGIPVQVLDTAGIRETSDQVEQIGVERSRRAAQSADLVLLTIDASAGWSAEDQTIWEAVSDRPILLVINKRDRLSEAERHAIALPQQEFKAIVWTAAAQQKGIEDLEAAILAAVGTGDLTSANWDWALNQRQVAALTTAQTALRRVEETLQAQLPLDFWTIDLREAIAALGSITGEGIAESMLDLIFSRFCIGK.

Residues arginine 27, glutamate 89, and arginine 128 each coordinate (6S)-5-formyl-5,6,7,8-tetrahydrofolate. The region spanning 223–383 (GLKIAIVGRP…LEAAILAAVG (161 aa)) is the TrmE-type G domain. GTP is bound by residues 233–238 (NVGKSS), 252–258 (TDLPGRT), and 277–280 (DTAG). Mg(2+)-binding residues include serine 237 and threonine 258. Lysine 462 lines the (6S)-5-formyl-5,6,7,8-tetrahydrofolate pocket.

The protein belongs to the TRAFAC class TrmE-Era-EngA-EngB-Septin-like GTPase superfamily. TrmE GTPase family. In terms of assembly, homodimer. Heterotetramer of two MnmE and two MnmG subunits. The cofactor is K(+).

Its subcellular location is the cytoplasm. Functionally, exhibits a very high intrinsic GTPase hydrolysis rate. Involved in the addition of a carboxymethylaminomethyl (cmnm) group at the wobble position (U34) of certain tRNAs, forming tRNA-cmnm(5)s(2)U34. This Synechococcus sp. (strain ATCC 27144 / PCC 6301 / SAUG 1402/1) (Anacystis nidulans) protein is tRNA modification GTPase MnmE.